The chain runs to 299 residues: Deoxyribonuclease-1-like 2 (299 aa).

An N-terminal signal peptide occupies residues 1-20 (MGGPRALLAALWALEAAGTA). Catalysis depends on residues glutamate 99 and histidine 170. A disulfide bond links cysteine 209 and cysteine 245.

Belongs to the DNase I family. Mg(2+) is required as a cofactor. The cofactor is Ca(2+). As to expression, preferentially expressed in the skin and up-regulated during keratinocytes differentiation. Highly abundant (at protein level) in the stratum granulosum.

It localises to the cytoplasm. The protein localises to the secreted. Divalent cation-dependent acid DNA endonuclease involved in the breakdown of the nucleus during corneocyte formation of epidermal keratinocytes. May play an immune role by eliminating harmful DNA released into the extracellular environment by damaged epidermal cells. This is Deoxyribonuclease-1-like 2 (DNASE1L2) from Homo sapiens (Human).